Here is a 954-residue protein sequence, read N- to C-terminus: Glycine dehydrogenase (decarboxylating) (954 aa).

Lys-704 bears the N6-(pyridoxal phosphate)lysine mark.

The protein belongs to the GcvP family. In terms of assembly, the glycine cleavage system is composed of four proteins: P, T, L and H. It depends on pyridoxal 5'-phosphate as a cofactor.

The catalysed reaction is N(6)-[(R)-lipoyl]-L-lysyl-[glycine-cleavage complex H protein] + glycine + H(+) = N(6)-[(R)-S(8)-aminomethyldihydrolipoyl]-L-lysyl-[glycine-cleavage complex H protein] + CO2. Its function is as follows. The glycine cleavage system catalyzes the degradation of glycine. The P protein binds the alpha-amino group of glycine through its pyridoxal phosphate cofactor; CO(2) is released and the remaining methylamine moiety is then transferred to the lipoamide cofactor of the H protein. The sequence is that of Glycine dehydrogenase (decarboxylating) from Vibrio vulnificus (strain CMCP6).